We begin with the raw amino-acid sequence, 294 residues long: Nucleotide-binding protein DICTH_1001 (294 aa).

10 to 17 (GLSGAGKS) is an ATP binding site. 61-64 (DIRT) lines the GTP pocket.

It belongs to the RapZ-like family.

Displays ATPase and GTPase activities. This Dictyoglomus thermophilum (strain ATCC 35947 / DSM 3960 / H-6-12) protein is Nucleotide-binding protein DICTH_1001.